Consider the following 52-residue polypeptide: UPF0391 membrane protein Avin_10980 (52 aa).

The next 2 membrane-spanning stretches (helical) occupy residues 4–24 (WSII…GGIA) and 29–49 (GIAK…LLFG).

Belongs to the UPF0391 family.

The protein localises to the cell membrane. This is UPF0391 membrane protein Avin_10980 from Azotobacter vinelandii (strain DJ / ATCC BAA-1303).